Here is a 1516-residue protein sequence, read N- to C-terminus: Lysine-specific demethylase 5C (1516 aa).

The 42-residue stretch at 14–55 (CPVFEPSWAEFRDPLGYIAKIRPIAEKSGICKIRPPADWQPP) folds into the JmjN domain. Residues 24–128 (FRDPLGYIAK…IVYPYEMYQS (105 aa)) form the ARID domain. The segment covering 142 to 151 (NEEKDKEYKP) has biased composition (basic and acidic residues). The tract at residues 142 to 186 (NEEKDKEYKPHSIPLRQSVQPSKFNSYGRRAKRLQPDPEPTEEDI) is disordered. Polar residues predominate over residues 156–166 (LRQSVQPSKFN). Glycyl lysine isopeptide (Lys-Gly) (interchain with G-Cter in SUMO2) cross-links involve residues K164, K188, K203, and K233. Positions 216–262 (LRKKDKEGPECPPTVVVKEESGGDVKVESTSPKTFLESKEELSHSPE) are disordered. The segment covering 232 to 242 (VKEESGGDVKV) has biased composition (basic and acidic residues). Phosphoserine is present on S246. K254 participates in a covalent cross-link: Glycyl lysine isopeptide (Lys-Gly) (interchain with G-Cter in SUMO2). Phosphoserine occurs at positions 260 and 276. Residues 283-333 (SYVCRMCSRGDEDDKLLLCDGCDDNYHIFCLLPPLPEIPKGVWRCPKCVMA) form a PHD-type 1 zinc finger. Y399 provides a ligand contact to 2-oxoglutarate. One can recognise a JmjC domain in the interval 427-593 (EYATSGWNLN…AGRQCIEHYR (167 aa)). 2 residues coordinate Fe cation: H473 and E475. 3 residues coordinate 2-oxoglutarate: S481, N483, and K491. H561 is a Fe cation binding site. A C5HC2 zinc finger spans residues 666-718 (CIKCKTTCFLSALACYDCPDGLVCLSHINDLCKCSSSRQYLRYRYTLDELPAM). Phosphoserine is present on residues S852 and S856. A Glycyl lysine isopeptide (Lys-Gly) (interchain with G-Cter in SUMO2) cross-link involves residue K1086. The PHD-type 2 zinc finger occupies 1144–1209 (TSICVCGQVP…KFLCPLCMRS (66 aa)). The segment at 1274–1305 (LQAEPRPEEPPTYPSTPAFDPLREGSGKDMPK) is disordered. The span at 1294–1304 (PLREGSGKDMP) shows a compositional bias: basic and acidic residues. Phosphoserine is present on S1318. The segment at 1400–1516 (ERHGSRARGR…CPQQPPQQQL (117 aa)) is disordered. Residues 1404-1419 (SRARGRALERRRRRKV) are compositionally biased toward basic residues. Residues 1420-1437 (DRGGEGDDPAREELEPKR) are compositionally biased toward basic and acidic residues. Residues 1444–1459 (EAEEAHEEEELEEETG) show a composition bias toward acidic residues. 2 stretches are compositionally biased toward polar residues: residues 1471–1481 (GSPSTQENQNG) and 1489–1500 (SSGSSVPFSTLT).

Belongs to the JARID1 histone demethylase family. Part of two distinct complexes, one containing E2F6, and the other containing REST. Interacts with ZMYND8. Requires Fe(2+) as cofactor.

The protein resides in the nucleus. The catalysed reaction is N(6),N(6),N(6)-trimethyl-L-lysyl(4)-[histone H3] + 3 2-oxoglutarate + 3 O2 = L-lysyl(4)-[histone H3] + 3 formaldehyde + 3 succinate + 3 CO2. In terms of biological role, histone demethylase that specifically demethylates 'Lys-4' of histone H3, thereby playing a central role in histone code. Does not demethylate histone H3 'Lys-9', H3 'Lys-27', H3 'Lys-36', H3 'Lys-79' or H4 'Lys-20'. Demethylates trimethylated and dimethylated but not monomethylated H3 'Lys-4'. Participates in transcriptional repression of neuronal genes by recruiting histone deacetylases and REST at neuron-restrictive silencer elements. This Sus scrofa (Pig) protein is Lysine-specific demethylase 5C (KDM5C).